The primary structure comprises 234 residues: uncharacterized protein (234 aa).

Residues 13–32 (KSINYYIFFFQYTLVYNTIQ) traverse the membrane as a helical segment. Disordered regions lie at residues 102-130 (HSKTTSLPFSSSSPQSSSSSSSSSSSSNS) and 159-185 (ESDSKSDSEFDSESNSDFDSESESEYE). Residues 103 to 130 (SKTTSLPFSSSSPQSSSSSSSSSSSSNS) show a composition bias toward low complexity. Positions 167–185 (EFDSESNSDFDSESESEYE) are enriched in acidic residues.

Its subcellular location is the membrane. This is an uncharacterized protein from Dictyostelium discoideum (Social amoeba).